A 241-amino-acid polypeptide reads, in one-letter code: Phosphoadenosine 5'-phosphosulfate reductase (241 aa).

Residue Cys-235 is the Nucleophile; cysteine thiosulfonate intermediate of the active site.

This sequence belongs to the PAPS reductase family. CysH subfamily.

It localises to the cytoplasm. The catalysed reaction is [thioredoxin]-disulfide + sulfite + adenosine 3',5'-bisphosphate + 2 H(+) = [thioredoxin]-dithiol + 3'-phosphoadenylyl sulfate. It functions in the pathway sulfur metabolism; hydrogen sulfide biosynthesis; sulfite from sulfate: step 3/3. Catalyzes the formation of sulfite from phosphoadenosine 5'-phosphosulfate (PAPS) using thioredoxin as an electron donor. The sequence is that of Phosphoadenosine 5'-phosphosulfate reductase from Xanthomonas euvesicatoria pv. vesicatoria (strain 85-10) (Xanthomonas campestris pv. vesicatoria).